The primary structure comprises 630 residues: Transcription factor MYC1 (630 aa).

2 disordered regions span residues 356 to 398 (FGDS…NNEE) and 430 to 463 (VKEA…EAER). The segment covering 440–449 (KPRKRGRKPA) has biased composition (basic residues). Over residues 450–463 (NGREEPLNHVEAER) the composition is skewed to basic and acidic residues. The tract at residues 453–466 (EEPLNHVEAERQRR) is basic motif; degenerate. The region spanning 453-502 (EEPLNHVEAERQRREKLNQRFYALRAVVPNVSKMDKASLLGDAIAYINEL) is the bHLH domain. Positions 467 to 502 (EKLNQRFYALRAVVPNVSKMDKASLLGDAIAYINEL) are helix-loop-helix motif.

As to expression, highly expressed in trichomes and at lower levels in leaves and flowers. Expressed at low levels in roots, stems, leaves, flowers and fruits.

It is found in the nucleus. Functionally, transcriptional activator that binds to the G-box motif (5'-AACGTG-3') found in a number of promoters of jasmonate-induced genes. Transcription activator involved in the transcriptional regulation of terpene biosynthesis in glandular trichomes. Binds to the promoter of the linalool synthase TPS5 and promotes TPS5 gene transactivation. Acts synergistically with EOT1 in the transactivation of TPS5. Involved in type VI glandular trichome development. Involved in the activation of terpene synthases required for volatile mono- and sesquiterpenes synthesis by the glandular cells of type VI trichomes. This Solanum lycopersicum (Tomato) protein is Transcription factor MYC1.